The primary structure comprises 501 residues: Aminoaldehyde dehydrogenase ALDH10A8, chloroplastic (501 aa).

Positions 99 and 189 each coordinate Na(+). NAD(+)-binding positions include 238-243 (GSFATG) and 238-245 (GSFATGSK). Glu-260 serves as the catalytic Proton acceptor. NAD(+) is bound by residues Cys-294 and Glu-393. Cys-294 acts as the Nucleophile in catalysis.

Belongs to the aldehyde dehydrogenase family. As to quaternary structure, homodimer. As to expression, widely expressed.

Its subcellular location is the cytoplasm. It is found in the plastid. The protein localises to the chloroplast. The enzyme catalyses 4-aminobutanal + NAD(+) + H2O = 4-aminobutanoate + NADH + 2 H(+). It carries out the reaction 3-aminopropanal + NAD(+) + H2O = beta-alanine + NADH + 2 H(+). It catalyses the reaction 4-(trimethylamino)butanal + NAD(+) + H2O = 4-(trimethylamino)butanoate + NADH + 2 H(+). The catalysed reaction is 4-guanidinobutanal + NAD(+) + H2O = 4-guanidinobutanoate + NADH + 2 H(+). The enzyme catalyses betaine aldehyde + NAD(+) + H2O = glycine betaine + NADH + 2 H(+). It participates in amine and polyamine biosynthesis; betaine biosynthesis via choline pathway; betaine from betaine aldehyde: step 1/1. Its function is as follows. Dehydrogenase that catalyzes the oxidation of several aminoaldehydes. Metabolizes and detoxifies aldehyde products of polyamine degradation to non-toxic amino acids. Catalyzes the oxidation of 4-aminobutanal and 3-aminopropanal to 4-aminobutanoate and beta-alanine, respectively. Production of 4-aminobutinoate by ALDH10A8 may confer tolerance to salt stress. Catalyzes the oxidation of 4-(trimethylamino)butanal and 4-guanidinobutanal to 4-trimethylammoniobutanoate and 4-guanidinobutanoate, respectively. Involved in glycine betaine biosynthesis. Catalyzes with low efficiency the oxidation of betaine aldehyde to glycine betaine. The protein is Aminoaldehyde dehydrogenase ALDH10A8, chloroplastic of Arabidopsis thaliana (Mouse-ear cress).